Consider the following 463-residue polypeptide: Lysosomal proton-coupled steroid conjugate and bile acid symporter SLC46A3 (463 aa).

The signal sequence occupies residues Met-1–Thr-20. The Extracellular portion of the chain corresponds to Ser-21–Asn-73. Asn-38, Asn-46, and Asn-53 each carry an N-linked (GlcNAc...) asparagine glycan. Residues Leu-74–Ile-94 traverse the membrane as a helical segment. Residues Ser-95–Lys-101 are Cytoplasmic-facing. The helical transmembrane segment at Phe-102–Phe-124 threads the bilayer. The Extracellular portion of the chain corresponds to Ala-125 to Ala-133. A helical membrane pass occupies residues Ser-134–Val-156. Topologically, residues Asp-157–Ala-170 are cytoplasmic. The chain crosses the membrane as a helical span at residues Val-171 to Ile-191. Topologically, residues Arg-192–Gly-197 are extracellular. A helical membrane pass occupies residues Trp-198–Leu-218. Residues Gly-219–Cys-261 lie on the Cytoplasmic side of the membrane. Residues Leu-262 to Ile-282 form a helical membrane-spanning segment. Residues Leu-283–Glu-294 are Extracellular-facing. The chain crosses the membrane as a helical span at residues Val-295–Ile-315. Residues Trp-316–Asp-324 lie on the Cytoplasmic side of the membrane. A helical transmembrane segment spans residues Ile-325–Ala-345. The Extracellular portion of the chain corresponds to Ser-346–Thr-347. A helical membrane pass occupies residues Thr-348 to Leu-368. At Arg-369 to Gly-382 the chain is on the cytoplasmic side. A helical transmembrane segment spans residues Ile-383 to Phe-403. Residues Asn-404 to Pro-415 lie on the Extracellular side of the membrane. The chain crosses the membrane as a helical span at residues Gly-416–Val-436. Residues Lys-437 to Cys-463 are Cytoplasmic-facing. Residues Tyr-446–Leu-449 carry the Tyrosine-based lysosomal-sorting motif motif.

It belongs to the major facilitator superfamily. SLC46A family.

It localises to the lysosome membrane. It carries out the reaction estrone 3-sulfate(out) + n H(+)(out) = estrone 3-sulfate(in) + n H(+)(in). The catalysed reaction is 25-hydroxyvitamin D3 sulfate(out) + n H(+)(out) = 25-hydroxyvitamin D3 sulfate(in) + n H(+)(in). The enzyme catalyses cholate(out) + n H(+)(out) = cholate(in) + n H(+)(in). It catalyses the reaction glycocholate(out) + n H(+)(out) = glycocholate(in) + n H(+)(in). It carries out the reaction taurocholate(out) + n H(+)(out) = taurocholate(in) + n H(+)(in). The catalysed reaction is dehydroepiandrosterone 3-sulfate(out) + n H(+)(out) = dehydroepiandrosterone 3-sulfate(in) + n H(+)(in). The enzyme catalyses N-acetyl-D-muramoyl-L-alanyl-D-isoglutamine(out) + n H(+)(out) = N-acetyl-D-muramoyl-L-alanyl-D-isoglutamine(in) + n H(+)(in). It catalyses the reaction 2',3'-cGAMP(out) + n H(+)(out) = 2',3'-cGAMP(in) + n H(+)(in). In terms of biological role, lysosomal proton-coupled steroid conjugate and bile acid transporter. Preferentially recognizes lipophilic steroid conjugates or bile acis as endogenous substrates and seems to mediate escape from lysosomes to the cytoplasm. Modulates hepatic cytosolic copper homeostasis, maybe acting as a lysosomal copper transporter and sequestering copper ions in the lysosome. Delivers pathogen-associated molecular patterns to cytosolic pattern recognition receptors as part of the innate immune response to microbes. Selectively transports bacterial muramyl dipeptide (MDP) into the cytosol for recognition by NOD2, triggering inflammatory responses. Likely acts as a redundant importer of cyclic GMP-AMP dinucleotides (cGAMPs) in monocyte and macrophage cell lineages. The transport mechanism, its electrogenicity and stoichiometry remain to be elucidated. This Pongo abelii (Sumatran orangutan) protein is Lysosomal proton-coupled steroid conjugate and bile acid symporter SLC46A3 (SLC46A3).